A 1351-amino-acid chain; its full sequence is Bromodomain-containing protein 4A (1351 aa).

Disordered stretches follow at residues 1 to 23 (MSSETGLGTRLRATSGMGDGIEG), 35 to 58 (PQPQATVMNNPDPPEITRPNQPKR), 168 to 244 (ETEL…RPPA), 285 to 368 (AAQP…DTKT), 478 to 638 (EPEE…PMSY), 700 to 799 (CLRK…LDSS), and 821 to 1334 (PDLP…PSID). Positions 58-164 (RQTNQLQYLL…KLFLQKISEM (107 aa)) constitute a Bromo 1 domain. The span at 208–219 (VKPPVTPVSKPS) shows a compositional bias: low complexity. The segment covering 220–235 (TPTPPTVTRAPTPPQT) has biased composition (pro residues). Basic and acidic residues predominate over residues 327-343 (PRKENGRQIRPTKKTEV). The segment covering 349 to 359 (PAPPVLHPQPA) has biased composition (pro residues). Positions 366-475 (TKTSEQLRYC…DVFEMRFAKM (110 aa)) constitute a Bromo 2 domain. The span at 482–504 (APAPVPSLAPGPPAPSIKGPPPT) shows a compositional bias: pro residues. The tract at residues 504–522 (TSSDSSSDSTSDSESSSDS) is NPS region. Over residues 505-517 (SSDSSSDSTSDSE) the composition is skewed to low complexity. A BID region region spans residues 543-598 (QLAALSQPQPNKPKKKEREKRKEKHKRKEEVEEPRKGRIREPPAKKPKKSVQGSGG). Positions 554–569 (KPKKKEREKRKEKHKR) are enriched in basic residues. Positions 570-586 (KEEVEEPRKGRIREPPA) are enriched in basic and acidic residues. Residues 607-621 (PPPAPRPARPAPPSA) are compositionally biased toward pro residues. Positions 624 to 708 (ESSEEETQRC…SCLRKKRKSQ (85 aa)) constitute an NET domain. Residues 629-638 (ETQRCRPMSY) show a composition bias toward basic and acidic residues. A compositionally biased stretch (low complexity) spans 725-738 (SSSESESSSESSTS). Basic residues predominate over residues 751–767 (QKKKGHSGRESRKHHHP). Residues 788–799 (PSYPLPSSLDSS) are compositionally biased toward low complexity. Residues 872–890 (PAMPPSASPPPPAPQPPQQ) show a composition bias toward pro residues. The segment covering 892 to 902 (HVHHHHHHHAQ) has biased composition (basic residues). Residues 927-953 (LQKSQQPPTQSPIHSLLTSVKVQSQTP) show a composition bias toward polar residues. Residues 968–983 (VYPPPPSTATTAPPPA) show a composition bias toward pro residues. Low complexity-rich tracts occupy residues 994–1003 (PVVPQQLPAG) and 1011–1028 (QQQQHPALQGTLVSSHQQ). Residues 1051 to 1350 (RQQKQETYPG…LMEIFEQNLF (300 aa)) are C-terminal (CTD) region. Positions 1075 to 1089 (PPVPPYPGLTHPPSP) are enriched in pro residues. Basic and acidic residues-rich tracts occupy residues 1150–1161 (PRPDLKKMDGGR) and 1176–1197 (PEKEKQKQEPKTPVAPKKDIKI). The span at 1214-1224 (PTSAGKSTSDS) shows a compositional bias: polar residues. The segment covering 1226–1284 (ELFRRQAREKEERERALKLQAEQAERVRREQDRMSRTREDDEVQDQARKAHEEARRRQE) has biased composition (basic and acidic residues). Over residues 1301-1310 (SPAQSSQPMM) the composition is skewed to low complexity. Residues 1311-1323 (DQREMARKREQER) show a composition bias toward basic and acidic residues.

It belongs to the BET family.

It localises to the nucleus. The protein resides in the chromosome. Functionally, chromatin reader protein that recognizes and binds acetylated histones and plays a key role in transmission of epigenetic memory across cell divisions and transcription regulation. Remains associated with acetylated chromatin throughout the entire cell cycle and provides epigenetic memory for postmitotic G1 gene transcription by preserving acetylated chromatin status and maintaining high-order chromatin structure. During interphase, plays a key role in regulating the transcription of signal-inducible genes by associating with the P-TEFb complex and recruiting it to promoters. The sequence is that of Bromodomain-containing protein 4A (brd4-a) from Xenopus laevis (African clawed frog).